The chain runs to 232 residues: Uracil phosphoribosyltransferase (232 aa).

38–42 (KGLVR) is a binding site for GTP. 5-phospho-alpha-D-ribose 1-diphosphate contacts are provided by residues arginine 87, arginine 112, and 140–148 (DPMIATGST). Uracil is bound by residues isoleucine 204 and 209–211 (GDA). Residue aspartate 210 coordinates 5-phospho-alpha-D-ribose 1-diphosphate.

It belongs to the UPRTase family. Mg(2+) serves as cofactor.

The catalysed reaction is UMP + diphosphate = 5-phospho-alpha-D-ribose 1-diphosphate + uracil. The protein operates within pyrimidine metabolism; UMP biosynthesis via salvage pathway; UMP from uracil: step 1/1. With respect to regulation, allosterically activated by GTP. Its function is as follows. Catalyzes the conversion of uracil and 5-phospho-alpha-D-ribose 1-diphosphate (PRPP) to UMP and diphosphate. This chain is Uracil phosphoribosyltransferase, found in Methanococcus vannielii (strain ATCC 35089 / DSM 1224 / JCM 13029 / OCM 148 / SB).